Consider the following 263-residue polypeptide: MKIAIAGASGRMGQMLIDTVLRTPGVTLAAALDRAGSDAVGQDAGARLGKATGVIVTDDLRTGLSQADVLIDFTRPEATLAHLEIARELGVGVVIGTTGFTAEQKASFKDYGATIGVVWAPNMSVGVNATFKLIEVAAKILAQGYDVEIVEAHHKHKIDAPSGTALKMGEIVAEAQGTTLAERAVYAREGETGPRMNGTIGFATVRGGDIVGDHTVLFVGEGERIEITHRSNSRQSYAEGAVRAACFLAGKKGLFDMNDVLGL.

NAD(+)-binding positions include 7–12 (GASGRM) and Asp-33. Arg-34 serves as a coordination point for NADP(+). NAD(+) is bound by residues 96–98 (GTT) and 120–123 (APNM). Catalysis depends on His-153, which acts as the Proton donor/acceptor. His-154 lines the (S)-2,3,4,5-tetrahydrodipicolinate pocket. The active-site Proton donor is the Lys-157. 163–164 (GT) contacts (S)-2,3,4,5-tetrahydrodipicolinate.

Belongs to the DapB family.

The protein resides in the cytoplasm. The enzyme catalyses (S)-2,3,4,5-tetrahydrodipicolinate + NAD(+) + H2O = (2S,4S)-4-hydroxy-2,3,4,5-tetrahydrodipicolinate + NADH + H(+). It carries out the reaction (S)-2,3,4,5-tetrahydrodipicolinate + NADP(+) + H2O = (2S,4S)-4-hydroxy-2,3,4,5-tetrahydrodipicolinate + NADPH + H(+). The protein operates within amino-acid biosynthesis; L-lysine biosynthesis via DAP pathway; (S)-tetrahydrodipicolinate from L-aspartate: step 4/4. Its function is as follows. Catalyzes the conversion of 4-hydroxy-tetrahydrodipicolinate (HTPA) to tetrahydrodipicolinate. The protein is 4-hydroxy-tetrahydrodipicolinate reductase of Ralstonia nicotianae (strain ATCC BAA-1114 / GMI1000) (Ralstonia solanacearum).